Here is a 122-residue protein sequence, read N- to C-terminus: Protein preY, mitochondrial (122 aa).

A mitochondrion-targeting transit peptide spans 1–40 (MLAVRAWGRTYNTLVQRKLNAACPTGALPAVTLRPLHCSL). The TRM112 domain maps to 56–102 (DPTLLQFLVCPLSRKSLRYEESTNELINDELGIAYPIVDGIPNMIPQ).

Belongs to the PREY family.

Its subcellular location is the mitochondrion. In terms of biological role, in mitochondria, S-adenosylmethionine-dependent methyltransferase chaperone that supports both coenzyme Q biosynthesis and NADH:ubiquinone oxidoreductase complex (complex I, MT-ND1) assembly. The polypeptide is Protein preY, mitochondrial (pyurf) (Xenopus tropicalis (Western clawed frog)).